We begin with the raw amino-acid sequence, 57 residues long: Small ribosomal subunit protein bS21 (57 aa).

Positions 35-57 (REFYEKPSVRRKKKSEAARKRKY) are disordered. A compositionally biased stretch (basic residues) spans 43 to 57 (VRRKKKSEAARKRKY).

It belongs to the bacterial ribosomal protein bS21 family.

The polypeptide is Small ribosomal subunit protein bS21 (Bacillus licheniformis (strain ATCC 14580 / DSM 13 / JCM 2505 / CCUG 7422 / NBRC 12200 / NCIMB 9375 / NCTC 10341 / NRRL NRS-1264 / Gibson 46)).